The following is an 84-amino-acid chain: MSSGGLLLLLGLLTLWAELTPISSHDRPKFCNLAPESGRCRGHLRRIYYNLESNKCKVFFYGGCGGNANNFETRDECRQTCGGK.

The N-terminal stretch at 1–24 (MSSGGLLLLLGLLTLWAELTPISS) is a signal peptide. In terms of domain architecture, BPTI/Kunitz inhibitor spans 31-81 (CNLAPESGRCRGHLRRIYYNLESNKCKVFFYGGCGGNANNFETRDECRQTC). Cystine bridges form between C31-C81, C40-C64, and C56-C77.

Belongs to the venom Kunitz-type family. Expressed by the venom gland.

The protein localises to the secreted. Serine protease inhibitor that inhibits trypsin. This chain is Kunitz-type serine protease inhibitor B6, found in Daboia siamensis (Eastern Russel's viper).